Reading from the N-terminus, the 459-residue chain is Cysteine--tRNA ligase (459 aa).

Residue C28 coordinates Zn(2+). A 'HIGH' region motif is present at residues 30-40 (VTVYDLCHIGH). Zn(2+) contacts are provided by C209, H234, and E238. The 'KMSKS' region signature appears at 266 to 270 (KMSKS). K269 provides a ligand contact to ATP.

It belongs to the class-I aminoacyl-tRNA synthetase family. Monomer. The cofactor is Zn(2+).

Its subcellular location is the cytoplasm. The catalysed reaction is tRNA(Cys) + L-cysteine + ATP = L-cysteinyl-tRNA(Cys) + AMP + diphosphate. In Histophilus somni (strain 2336) (Haemophilus somnus), this protein is Cysteine--tRNA ligase.